The primary structure comprises 514 residues: Putative GTP-binding protein 6 (514 aa).

Residues 48-71 form a disordered region; it reads WAGGGPVRGGGEEDPREDEEEEED. Positions 59–71 are enriched in acidic residues; the sequence is EEDPREDEEEEED. In terms of domain architecture, Hflx-type G spans 285–449; the sequence is PVVSVVGYTN…ALEASVLRAT (165 aa). Thr-298 and Thr-319 together coordinate Mg(2+).

This sequence belongs to the TRAFAC class OBG-HflX-like GTPase superfamily. HflX GTPase family. The cofactor is Mg(2+).

The chain is Putative GTP-binding protein 6 (Gtpbp6) from Mus musculus (Mouse).